A 397-amino-acid chain; its full sequence is Elongation factor Tu (397 aa).

Residues 10 to 206 (KPHVNIGTIG…AVDENIPQPE (197 aa)) form the tr-type G domain. The interval 19-26 (GHVDHGKT) is G1. GTP is bound at residue 19 to 26 (GHVDHGKT). Residue T26 coordinates Mg(2+). Positions 62-66 (GITIS) are G2. The tract at residues 83-86 (DCPG) is G3. GTP contacts are provided by residues 83 to 87 (DCPGH) and 138 to 141 (NKAD). The segment at 138 to 141 (NKAD) is G4. The interval 176–178 (SAL) is G5.

It belongs to the TRAFAC class translation factor GTPase superfamily. Classic translation factor GTPase family. EF-Tu/EF-1A subfamily. As to quaternary structure, monomer.

The protein localises to the cytoplasm. The enzyme catalyses GTP + H2O = GDP + phosphate + H(+). Functionally, GTP hydrolase that promotes the GTP-dependent binding of aminoacyl-tRNA to the A-site of ribosomes during protein biosynthesis. This chain is Elongation factor Tu, found in Streptomyces cinnamoneus (Streptoverticillium cinnamoneum).